Consider the following 360-residue polypeptide: Phospho-N-acetylmuramoyl-pentapeptide-transferase (360 aa).

Transmembrane regions (helical) follow at residues 27-47, 72-92, 94-114, 132-152, 168-188, 199-219, 236-256, 263-283, 288-308, and 338-358; these read IVSLLTALFISLWMGPHLIAW, PTMGGLMILFSITISVLMWAY, SNPYVWCVLFILIGYGIVGFI, WKYFWQSIIALAAAFTMYSIG, IMPQLGLLYVLLAYFVIVGTS, GLAIMPTVFVAAGFALVAWAT, AGELVIVCTAIVGAGLGFLWF, VFMGDVGSLALGGALGTIAVL, FLLVIMGGVFVVETLSVILQV, and VIVRFWIISLMLVLIGLATLK.

It belongs to the glycosyltransferase 4 family. MraY subfamily. Requires Mg(2+) as cofactor.

It localises to the cell inner membrane. The catalysed reaction is UDP-N-acetyl-alpha-D-muramoyl-L-alanyl-gamma-D-glutamyl-meso-2,6-diaminopimeloyl-D-alanyl-D-alanine + di-trans,octa-cis-undecaprenyl phosphate = di-trans,octa-cis-undecaprenyl diphospho-N-acetyl-alpha-D-muramoyl-L-alanyl-D-glutamyl-meso-2,6-diaminopimeloyl-D-alanyl-D-alanine + UMP. It participates in cell wall biogenesis; peptidoglycan biosynthesis. Functionally, catalyzes the initial step of the lipid cycle reactions in the biosynthesis of the cell wall peptidoglycan: transfers peptidoglycan precursor phospho-MurNAc-pentapeptide from UDP-MurNAc-pentapeptide onto the lipid carrier undecaprenyl phosphate, yielding undecaprenyl-pyrophosphoryl-MurNAc-pentapeptide, known as lipid I. The sequence is that of Phospho-N-acetylmuramoyl-pentapeptide-transferase from Yersinia pestis bv. Antiqua (strain Angola).